The primary structure comprises 433 residues: C2H2 type master regulator of conidiophore development brlA (433 aa).

Disordered regions lie at residues 24 to 49 (SDCPSMTSSFSPLDSPTPTPTSLYSQ), 240 to 269 (KSHTPSTPHRSVSMGTPSGSDTPVSRISGH), and 286 to 306 (MMQRHRQPSRKPSKKQLLRSN). The span at 30–49 (TSSFSPLDSPTPTPTSLYSQ) shows a compositional bias: low complexity. Over residues 240-264 (KSHTPSTPHRSVSMGTPSGSDTPVS) the composition is skewed to polar residues. The span at 288-302 (QRHRQPSRKPSKKQL) shows a compositional bias: basic residues. C2H2-type zinc fingers lie at residues 321-345 (FKCKEPGCKGRFKRQEHLKRHMKSH) and 351-376 (HVCWVPGCHRAFSRSDNLNAHYTKTH). The disordered stretch occupies residues 391-423 (ETSQDFDPDFRGQLTPDGRPIYGSKLEDSMPDC).

The protein resides in the nucleus. In terms of biological role, brlA, abaA and wetA are pivotal regulators of conidiophore development and conidium maturation. They act individually and together to regulate their own expression and that of numerous other sporulation-specific genes. Binds promoters of target genes at brlA response elements (BREs) containing the conserved sequence 5'-(C/A)(A/G)AGGG(G/A)-3'. Regulates genes involved in conidiogenesis. This Penicillium digitatum (strain PHI26 / CECT 20796) (Green mold) protein is C2H2 type master regulator of conidiophore development brlA.